A 142-amino-acid polypeptide reads, in one-letter code: Midkine-B (142 aa).

The signal sequence occupies residues 1-20; sequence MELRAFCVILLITILAVSSQ. Cystine bridges form between cysteine 36-cysteine 60, cysteine 44-cysteine 69, cysteine 51-cysteine 73, cysteine 83-cysteine 115, and cysteine 93-cysteine 125.

It belongs to the pleiotrophin family. In adults, expression is highest in the brain, eye and bone, with lower expression in the heart and lung. Not expressed in the ovary. In the tailbud stage embryo, expressed in the head and tail regions as well as in the central nervous system (CNS).

It is found in the secreted. Secreted protein that functions as a cytokine and growth factor and mediates its signal through cell-surface proteoglycan and non-proteoglycan receptors. Binds cell-surface proteoglycan receptors via their chondroitin sulfate (CS) groups. Thereby regulates many processes like inflammatory response, cell proliferation, cell adhesion, cell growth, cell survival, tissue regeneration, cell differentiation and cell migration. Inhibits mesoderm formation and promotes neural formation during development. Plays a role in development of the neuromuscular junction (NMJ). Has antibacterial activity against both Gram-positive and Gram-negative bacteria. The protein is Midkine-B (mdk-b) of Xenopus laevis (African clawed frog).